The sequence spans 81 residues: Acyl carrier protein (81 aa).

Residues 2 to 80 (ASKEEILAGL…DAVDFIDGAQ (79 aa)) form the Carrier domain. Ser40 carries the post-translational modification O-(pantetheine 4'-phosphoryl)serine.

It belongs to the acyl carrier protein (ACP) family. Post-translationally, 4'-phosphopantetheine is transferred from CoA to a specific serine of apo-ACP by AcpS. This modification is essential for activity because fatty acids are bound in thioester linkage to the sulfhydryl of the prosthetic group.

Its subcellular location is the cytoplasm. The protein operates within lipid metabolism; fatty acid biosynthesis. Carrier of the growing fatty acid chain in fatty acid biosynthesis. This is Acyl carrier protein from Micrococcus luteus (strain ATCC 4698 / DSM 20030 / JCM 1464 / CCM 169 / CCUG 5858 / IAM 1056 / NBRC 3333 / NCIMB 9278 / NCTC 2665 / VKM Ac-2230) (Micrococcus lysodeikticus).